A 373-amino-acid polypeptide reads, in one-letter code: Glutamate 5-kinase (373 aa).

Lysine 15 provides a ligand contact to ATP. Substrate-binding residues include serine 55, aspartate 142, and asparagine 154. Position 174–175 (174–175 (TD)) interacts with ATP. The PUA domain maps to 281 to 359 (RGSVVLDDGA…SQIEAVLGYV (79 aa)).

Belongs to the glutamate 5-kinase family.

The protein localises to the cytoplasm. The enzyme catalyses L-glutamate + ATP = L-glutamyl 5-phosphate + ADP. It participates in amino-acid biosynthesis; L-proline biosynthesis; L-glutamate 5-semialdehyde from L-glutamate: step 1/2. Its function is as follows. Catalyzes the transfer of a phosphate group to glutamate to form L-glutamate 5-phosphate. In Nitrosomonas eutropha (strain DSM 101675 / C91 / Nm57), this protein is Glutamate 5-kinase.